The chain runs to 125 residues: Holo-[acyl-carrier-protein] synthase (125 aa).

Asp-8 and Glu-57 together coordinate Mg(2+).

This sequence belongs to the P-Pant transferase superfamily. AcpS family. It depends on Mg(2+) as a cofactor.

It localises to the cytoplasm. It carries out the reaction apo-[ACP] + CoA = holo-[ACP] + adenosine 3',5'-bisphosphate + H(+). Its function is as follows. Transfers the 4'-phosphopantetheine moiety from coenzyme A to a Ser of acyl-carrier-protein. The polypeptide is Holo-[acyl-carrier-protein] synthase (Nitrosomonas eutropha (strain DSM 101675 / C91 / Nm57)).